A 27-amino-acid chain; its full sequence is Delta-conotoxin TxVIB (27 aa).

Intrachain disulfides connect cysteine 2/cysteine 17, cysteine 9/cysteine 21, and cysteine 16/cysteine 26.

This sequence belongs to the conotoxin O1 superfamily. Expressed by the venom duct.

It localises to the secreted. Delta-conotoxins bind to site 6 of voltage-gated sodium channels (Nav) and inhibit the inactivation process. Induces membrane depolarization and spontaneous repetitive firing of neurons. In Conus textile (Cloth-of-gold cone), this protein is Delta-conotoxin TxVIB.